A 122-amino-acid chain; its full sequence is MARIAGVNIPTNKRVLIALQYIHGIGQKNAAEIIEKVKIPVDRRVNQLSDAEVLQIREVIDRDYLVEGDLRRETGMNIKRLMDLGCYRGLRHRRGLPVRGQRTHTNARTRKGPAKAIAGKKK.

A disordered region spans residues 99-122 (RGQRTHTNARTRKGPAKAIAGKKK).

This sequence belongs to the universal ribosomal protein uS13 family. In terms of assembly, part of the 30S ribosomal subunit. Forms a loose heterodimer with protein S19. Forms two bridges to the 50S subunit in the 70S ribosome.

Functionally, located at the top of the head of the 30S subunit, it contacts several helices of the 16S rRNA. In the 70S ribosome it contacts the 23S rRNA (bridge B1a) and protein L5 of the 50S subunit (bridge B1b), connecting the 2 subunits; these bridges are implicated in subunit movement. Contacts the tRNAs in the A and P-sites. The polypeptide is Small ribosomal subunit protein uS13 (Rhodopseudomonas palustris (strain HaA2)).